We begin with the raw amino-acid sequence, 224 residues long: Oxalate oxidase GF-3.8 (224 aa).

The first 23 residues, 1-23, serve as a signal peptide directing secretion; the sequence is MGYSKNIASGMFAMLLLASAVLS. C33 and C49 are oxidised to a cystine. Residues 63-214 form the Cupin type-1 domain; the sequence is SKLAKAGNTS…ALRVEAGVVE (152 aa). N-linked (GlcNAc...) asparagine glycans are attached at residues N70 and N75. Mn(2+)-binding residues include H111, H113, E118, and H160.

Belongs to the germin family. As to quaternary structure, oligomer (believed to be a pentamer but probably hexamer).

It localises to the secreted. The protein resides in the extracellular space. Its subcellular location is the apoplast. It is found in the cytoplasm. The protein localises to the cell wall. The enzyme catalyses oxalate + O2 + 2 H(+) = H2O2 + 2 CO2. Produces developmental and stress-related release of hydrogen peroxide in the apoplast. May play an important role in several aspects of plant growth and defense mechanisms. In Triticum aestivum (Wheat), this protein is Oxalate oxidase GF-3.8.